The sequence spans 511 residues: MVKLRDISTIAVSESTHNFEVFSGLEGVSDTVANLKSENVEINVLGHNPGSLNILIDASPHFRDEKALSDCFGPQMGGVVYDSYDRMVMKNGRIENYPDTEIPTLDVTPLNVDRSLTPKQKENRNKCKKLFDHLLLEIQRGKITAGCVDDYFAFMHAAYCVLSKVYLPRFKYKHFEISSRLVTIHECNNNTKPSLFWSNRDDESHDYMTIIQMMVQVFSNAMTKYATSHLINEYHNDLDSPTSDILTKVVDELKDIDIEPATYATIVYLWLTGEDEIEDLDVLAVIFDECRSDGFVDNLLVRMLPPCEGASLTSEAIDTGLLYTRNDGYMVYTASMVEEDVNKMEYDRRYGLPLMEFRATNSLVTLRVDYTTKTNKQMKVQLMINKFPKFELMNTDIFSSQYLMLGKNIVIDMIKMTGHMLRGNVQSANLDTQRKLSNLVSSSHPWITRLVANRARDDVHIRFASHMITDLDNLTKREHPKTIFVESLKMLDHFGKSERYELLVYLSAADF.

Its subcellular location is the host cell junction. The protein localises to the host plasmodesma. It localises to the host cytoplasm. In terms of biological role, transports viral genome to neighboring plant cells directly through plasmosdesmata, without any budding. The movement protein allows efficient cell to cell propagation, by bypassing the host cell wall barrier. This Rice gall dwarf virus (RGDV) protein is Movement protein.